Reading from the N-terminus, the 78-residue chain is uncharacterized protein (78 aa).

The segment at 1 to 28 (MGGGNAQKSAMARAKNLEKAKAAGKGSQ) is disordered.

This is an uncharacterized protein from Arabidopsis thaliana (Mouse-ear cress).